The chain runs to 382 residues: Sulfate adenylyltransferase (382 aa).

Belongs to the sulfate adenylyltransferase family.

It carries out the reaction sulfate + ATP + H(+) = adenosine 5'-phosphosulfate + diphosphate. The protein operates within sulfur metabolism; hydrogen sulfide biosynthesis; sulfite from sulfate: step 1/3. The chain is Sulfate adenylyltransferase from Staphylothermus marinus (strain ATCC 43588 / DSM 3639 / JCM 9404 / F1).